The sequence spans 235 residues: Thiopurine S-methyltransferase (235 aa).

Positions 13, 48, 69, and 126 each coordinate S-adenosyl-L-methionine. Positions 199–235 are disordered; it reads PDPQNGAPRRVEHKVYQLTGKRPASPEADGRAAETED. The segment covering 226-235 has biased composition (basic and acidic residues); sequence ADGRAAETED.

The protein belongs to the class I-like SAM-binding methyltransferase superfamily. TPMT family.

Its subcellular location is the cytoplasm. It catalyses the reaction S-adenosyl-L-methionine + a thiopurine = S-adenosyl-L-homocysteine + a thiopurine S-methylether.. This chain is Thiopurine S-methyltransferase, found in Stutzerimonas stutzeri (strain A1501) (Pseudomonas stutzeri).